Consider the following 65-residue polypeptide: Large ribosomal subunit protein bL35 (65 aa).

Belongs to the bacterial ribosomal protein bL35 family.

In Aliarcobacter butzleri (strain RM4018) (Arcobacter butzleri), this protein is Large ribosomal subunit protein bL35.